We begin with the raw amino-acid sequence, 937 residues long: MGSLNIQHNGYDADVEKIREEEYPMLKDSIYLDHAGTTPYPKSLMDRFAQEMTTNLFGNPHSASASSQLSTQRIQDIRLRALQFFNADPADFDLVFVANATAGIKLVVEAMRCLPTGFDYVYHQSSHTSLVGVREEARSSVCLDTRQVEDWLSGSCPFDDNEDEERPILFAYPAQSNMDGRRFPLSWSSQICRQSLSPTNKRKTYTLLDAAALVSSSPLDLSNAETAPDFVVLSFYKIFGFPDLGALIVRKEVQDVFLSRRYFGGGTVDMVVCLKEQWHAPKDGFLHERLEDGTLPIHSIIALDVAMDVHAKLFGSMERVAGHTGFLARRLYQGLKGLRHANDELVCAIYSPDPETEESGPLVAFNIRNAQGIWISLAEVEKLATLKGIHIRTGGVCNPGGIASALGLEPWEMKQNFSSGFRCGTDNDTMGGKPTGIIRVSLGAMSTIADVDRFVQFVKEFYCEDTPPILPPPETKLDPSLRNTPELFIKSIVVYPIKSCAGFHVPPGIDWEVRPEGLVWDREWCLVHRGSGQALSQKRYPRMALLRPNLDFTKGELQVTFAGDISSSPGLPSSISVPLSKNPKMYAPKKSGMSSRVCGEEITPQTYASAQINDFFSTVLGVPCVLARFPPGGQGKGMTRHAKAHLQRHQHQQPHPAVSVSTRLTKPAMMPGAFPSPKAVETPPSPPDSDTERSATPTQEAQGPKPRRILLSNESPILAITSTSVDALNQSIALLNPSVSQPISEAVFRANLVLSPSPSTPSASPSNPLTPSPSPSTTSKPTPKPKQKPKQKLNPYEEDTWSSLTIFNSSSFSSSSSSCSTPSSSGFQTTTKFQMLGSCRRCHMVCIDQTTGSKTAGGEPFVTLSKTRRFEGKVFFGVHMGLQAEDEEDGHAEDIEKEGTGMGMGTGTGTGTGTRSMGGNGSVVKVRVGDVVRPSYL.

At Lys237 the chain carries N6-(pyridoxal phosphate)lysine. Residue Cys397 is part of the active site. 3 disordered regions span residues 633–710 (GQGK…RRIL), 756–795 (PSPSTPSASPSNPLTPSPSPSTTSKPTPKPKQKPKQKLNP), and 897–921 (KEGTGMGMGTGTGTGTGTRSMGGNG). Over residues 638–652 (MTRHAKAHLQRHQHQ) the composition is skewed to basic residues. The MOSC domain occupies 682 to 935 (TPPSPPDSDT…VRVGDVVRPS (254 aa)). Low complexity predominate over residues 756-767 (PSPSTPSASPSN). Residues 900-921 (TGMGMGTGTGTGTGTRSMGGNG) show a composition bias toward gly residues.

This sequence belongs to the class-V pyridoxal-phosphate-dependent aminotransferase family. MOCOS subfamily. Pyridoxal 5'-phosphate is required as a cofactor.

It carries out the reaction Mo-molybdopterin + L-cysteine + AH2 = thio-Mo-molybdopterin + L-alanine + A + H2O. The protein operates within cofactor biosynthesis; molybdopterin biosynthesis. Functionally, sulfurates the molybdenum cofactor. Sulfation of molybdenum is essential for xanthine dehydrogenase (XDH) and aldehyde oxidase (ADO) enzymes in which molybdenum cofactor is liganded by 1 oxygen and 1 sulfur atom in active form. This is Molybdenum cofactor sulfurase (nit-13) from Neurospora crassa (strain ATCC 24698 / 74-OR23-1A / CBS 708.71 / DSM 1257 / FGSC 987).